The following is a 492-amino-acid chain: Serine incorporator 4 (492 aa).

10 helical membrane-spanning segments follow: residues Tyr59–Val79, Ala113–Val133, Ser148–Pro168, Ile179–Ala199, Gly219–Phe239, Leu254–Ile274, Ser281–Leu301, Ile330–Ala350, Gly421–Phe441, and Val464–Ala484.

It belongs to the TDE1 family.

It is found in the membrane. In terms of biological role, incorporates a polar amino acid serine into membranes and facilitates the synthesis of two serine-derived lipids, phosphatidylserine and sphingolipids. This Mus musculus (Mouse) protein is Serine incorporator 4 (Serinc4).